Consider the following 111-residue polypeptide: Colipase (111 aa).

A signal peptide spans 1–17; it reads MEKVLALVLLTLAVAYA. The propeptide at 18-22 is enterostatin, activation peptide; it reads APDPR. 5 disulfides stabilise this stretch: cysteine 34-cysteine 45, cysteine 40-cysteine 56, cysteine 44-cysteine 78, cysteine 66-cysteine 86, and cysteine 80-cysteine 104.

It belongs to the colipase family. Forms a 1:1 stoichiometric complex with pancreatic lipase. Expressed by the pancreas.

It localises to the secreted. Its function is as follows. Colipase is a cofactor of pancreatic lipase. It allows the lipase to anchor itself to the lipid-water interface. Without colipase the enzyme is washed off by bile salts, which have an inhibitory effect on the lipase. Enterostatin has a biological activity as a satiety signal. This chain is Colipase (CLPS), found in Myocastor coypus (Coypu).